The primary structure comprises 206 residues: Sclerostin domain-containing protein 1 (206 aa).

Residues 1-23 form the signal peptide; that stretch reads MLPPAIHLSLIPLLCILMRNCLA. The tract at residues 42–62 is disordered; it reads AHPSSNSTLNQARNGGRHFSS. Residues 44-62 show a composition bias toward polar residues; the sequence is PSSNSTLNQARNGGRHFSS. Asn-47 carries an N-linked (GlcNAc...) asparagine glycan. Intrachain disulfides connect Cys-75-Cys-133, Cys-89-Cys-147, Cys-100-Cys-163, and Cys-104-Cys-165. Residues 75-170 form the CTCK domain; it reads CRELRSTKYI…TACKCKRYTR (96 aa). An N-linked (GlcNAc...) asparagine glycan is attached at Asn-173. Residues 176–206 form a disordered region; it reads SHNFESVSPAKPAQHHRERKRASKSSKHSLS. Positions 188 to 206 are enriched in basic residues; the sequence is AQHHRERKRASKSSKHSLS.

It belongs to the sclerostin family. As to quaternary structure, interacts with BMP2, BMP4, BMP6 and BMP7 with high affinity. In terms of tissue distribution, highly expressed in kidney at renal collecting ducts level and weakly in brain.

The protein resides in the secreted. May be involved in the onset of endometrial receptivity for implantation/sensitization for the decidual cell reaction. Enhances Wnt signaling and inhibits TGF-beta signaling. Directly antagonizes activity of BMP2, BMP4, BMP6 and BMP7 in a dose-dependent manner. The polypeptide is Sclerostin domain-containing protein 1 (Sostdc1) (Mus musculus (Mouse)).